A 354-amino-acid polypeptide reads, in one-letter code: Ubiquitin-conjugating enzyme E2 Z (354 aa).

The disordered stretch occupies residues 1-21 (MAESPTEEAATAGAGAAGPGA). A UBC core domain is found at 99 to 253 (QCLLRIKRDI…IRHETIRVAV (155 aa)). Cys-188 functions as the Glycyl thioester intermediate in the catalytic mechanism. The segment at 332 to 354 (NAEMDSDSSSSGTETDLHGSLRV) is disordered. Ser-337 carries the post-translational modification Phosphoserine.

It belongs to the ubiquitin-conjugating enzyme family. In terms of tissue distribution, widely expressed. Highly in placenta, pancreas, spleen and testis.

Its subcellular location is the cytoplasm. The protein localises to the nucleus. It catalyses the reaction S-ubiquitinyl-[E1 ubiquitin-activating enzyme]-L-cysteine + [E2 ubiquitin-conjugating enzyme]-L-cysteine = [E1 ubiquitin-activating enzyme]-L-cysteine + S-ubiquitinyl-[E2 ubiquitin-conjugating enzyme]-L-cysteine.. It functions in the pathway protein modification; protein ubiquitination. Its function is as follows. Catalyzes the covalent attachment of ubiquitin to other proteins. Specific substrate for UBA6, not charged with ubiquitin by UBE1. May be involved in apoptosis regulation. This is Ubiquitin-conjugating enzyme E2 Z (UBE2Z) from Homo sapiens (Human).